The primary structure comprises 411 residues: Exodeoxyribonuclease 7 large subunit (411 aa).

The protein belongs to the XseA family. In terms of assembly, heterooligomer composed of large and small subunits.

Its subcellular location is the cytoplasm. It carries out the reaction Exonucleolytic cleavage in either 5'- to 3'- or 3'- to 5'-direction to yield nucleoside 5'-phosphates.. Functionally, bidirectionally degrades single-stranded DNA into large acid-insoluble oligonucleotides, which are then degraded further into small acid-soluble oligonucleotides. The protein is Exodeoxyribonuclease 7 large subunit of Mycobacterium sp. (strain JLS).